The chain runs to 1238 residues: Cryptic loci regulator protein 1 (1238 aa).

6 disordered regions span residues 133–156, 196–237, 277–303, 546–568, 696–735, and 784–824; these read TQQQ…TEPN, PFSN…PSSI, ASLY…LGSM, QKSV…IDTT, SDNT…PFVH, and TLKE…QSRS. Residues 214-223 are compositionally biased toward polar residues; that stretch reads NVKNNSKKTA. Over residues 224–237 the composition is skewed to low complexity; sequence SSVNSNHSSIPSSI. Polar residues predominate over residues 291 to 303; it reads SSRNTSSYNLGSM. Residues 702–723 show a composition bias toward low complexity; the sequence is SLPKPSNSKLSSISSDGDASSN. Residues 785–796 show a composition bias toward basic and acidic residues; the sequence is LKEDASSTKQAK. Residues 810–819 show a composition bias toward polar residues; that stretch reads NDVSKNNSGE. The segment at 1062–1087 adopts a C2H2-type zinc-finger fold; it reads LNCEVSNCKKCFSNYEDMFKHLQHSH.

As to quaternary structure, interacts with clr3.

The protein resides in the nucleus. It is found in the chromosome. It localises to the centromere. Its subcellular location is the telomere. Its function is as follows. Regulates silencing of the mat2 and mat3 loci. Organizes the chromatin structure of the mating-type region where it also participates in establishing the 'cold spot' for recombination. Required for proper positioning of nucleosomes at heterochromatic loci and for transcriptional gene silencing (TGS) function of the Snf2/Hdac-containing repressor complex (SHREC). This chain is Cryptic loci regulator protein 1 (clr1), found in Schizosaccharomyces pombe (strain 972 / ATCC 24843) (Fission yeast).